The sequence spans 396 residues: S-adenosylmethionine synthase (396 aa).

Position 15 (H15) interacts with ATP. D17 serves as a coordination point for Mg(2+). A K(+)-binding site is contributed by E43. Residues E56 and Q99 each contribute to the L-methionine site. Positions 99 to 109 (QSSDIAMGVDK) are flexible loop. Residues 175–177 (DGK), 241–242 (RF), D250, 256–257 (RK), A273, and K277 contribute to the ATP site. D250 serves as a coordination point for L-methionine. Position 281 (K281) interacts with L-methionine.

Belongs to the AdoMet synthase family. As to quaternary structure, homotetramer; dimer of dimers. Requires Mg(2+) as cofactor. The cofactor is K(+).

Its subcellular location is the cytoplasm. The enzyme catalyses L-methionine + ATP + H2O = S-adenosyl-L-methionine + phosphate + diphosphate. It functions in the pathway amino-acid biosynthesis; S-adenosyl-L-methionine biosynthesis; S-adenosyl-L-methionine from L-methionine: step 1/1. Catalyzes the formation of S-adenosylmethionine (AdoMet) from methionine and ATP. The overall synthetic reaction is composed of two sequential steps, AdoMet formation and the subsequent tripolyphosphate hydrolysis which occurs prior to release of AdoMet from the enzyme. This Ruminiclostridium cellulolyticum (strain ATCC 35319 / DSM 5812 / JCM 6584 / H10) (Clostridium cellulolyticum) protein is S-adenosylmethionine synthase.